A 337-amino-acid chain; its full sequence is GTPase Obg (337 aa).

An Obg domain is found at 1 to 158; the sequence is MFVDRVIIEL…HHIELELKLI (158 aa). The OBG-type G domain occupies 159-330; it reads ADVGLVGFPN…LIEKMTQRLS (172 aa). GTP is bound by residues 165–172, 190–194, 212–215, 282–285, and 311–313; these read GFPNAGKS, FTTLQ, DIPG, NKID, and SAV. 2 residues coordinate Mg(2+): serine 172 and threonine 192.

It belongs to the TRAFAC class OBG-HflX-like GTPase superfamily. OBG GTPase family. Monomer. It depends on Mg(2+) as a cofactor.

It is found in the cytoplasm. In terms of biological role, an essential GTPase which binds GTP, GDP and possibly (p)ppGpp with moderate affinity, with high nucleotide exchange rates and a fairly low GTP hydrolysis rate. Plays a role in control of the cell cycle, stress response, ribosome biogenesis and in those bacteria that undergo differentiation, in morphogenesis control. In Protochlamydia amoebophila (strain UWE25), this protein is GTPase Obg.